Consider the following 1347-residue polypeptide: Neurofascin (1347 aa).

Positions 1–24 are cleaved as a signal peptide; the sequence is MARQPPPPWVHAAFLLCLLSLGGA. Topologically, residues 25–1217 are extracellular; sequence IEIPMDPSIQ…NQADIATQGW (1193 aa). Ig-like C2-type domains follow at residues 41–137, 143–230, 244–332, 337–424, 429–517, and 521–603; these read PTIT…LQVS, PKEN…NPFT, PSFM…ISVR, PYWL…AFVS, PPRM…VRLE, and PTRI…QDLA. 4 disulfides stabilise this stretch: cysteine 63/cysteine 118, cysteine 162/cysteine 213, cysteine 268/cysteine 316, and cysteine 358/cysteine 408. An N-linked (GlcNAc...) asparagine glycan is attached at asparagine 305. Residues asparagine 409 and asparagine 446 are each glycosylated (N-linked (GlcNAc...) asparagine). Cystine bridges form between cysteine 452/cysteine 501 and cysteine 543/cysteine 592. Tyrosine 481 is modified (phosphotyrosine). Asparagine 483 carries N-linked (GlcNAc...) asparagine glycosylation. Serine 485 bears the Phosphoserine mark. Fibronectin type-III domains lie at 630 to 725, 730 to 823, 828 to 930, and 934 to 1030; these read RPRD…TSGA, NPGD…SGED, APTE…TPEG, and APRR…PNEA. The interval 713 to 740 is disordered; it reads PSLPSERYRTSGAPPESNPGDVKGEGTR. N-linked (GlcNAc...) asparagine glycosylation is found at asparagine 752 and asparagine 778. Positions 915-934 are disordered; it reads GDGPRSETKEFTTPEGVPSA. Basic and acidic residues predominate over residues 916–926; that stretch reads DGPRSETKEFT. N-linked (GlcNAc...) asparagine glycosylation is found at asparagine 973 and asparagine 988. 2 disordered regions span residues 1011–1040 and 1090–1111; these read TQVG…PTLP and TTAA…TKIH. Pro residues predominate over residues 1024–1040; it reads PAPPNEATPTAAPPTLP. Residues 1090-1105 show a composition bias toward low complexity; the sequence is TTAAATTTTESPPTTT. The Fibronectin type-III 5 domain occupies 1114–1206; that stretch reads APDEQSIWNV…ITFMTSTAYT (93 aa). Residues 1218-1238 traverse the membrane as a helical segment; it reads FIGLMCAIALLVLILLIVCFI. The Cytoplasmic segment spans residues 1239–1347; sequence KRSRGGKYPV…SPVNAIYSLA (109 aa). The tract at residues 1248-1347 is disordered; sequence VREKKDVPLG…SPVNAIYSLA (100 aa). The span at 1261–1272 shows a compositional bias: acidic residues; sequence PKEEDGSFDYSD. Phosphoserine is present on residues serine 1267, serine 1281, serine 1294, serine 1297, serine 1333, serine 1334, and serine 1338. Residues 1278–1291 are compositionally biased toward polar residues; the sequence is LQGSQTSLDGTIKQ.

It belongs to the immunoglobulin superfamily. L1/neurofascin/NgCAM family. As to quaternary structure, horseshoe-shaped homodimer. Probable constituent of a NFASC/NRCAM/ankyrin-G complex. Associates with the sodium channel beta-1 (SCN1B) and beta-3 (SCN3B) subunits. Interacts with GLDN/gliomedin. Interacts with MYOC.

The protein resides in the cell membrane. It is found in the cell junction. The protein localises to the paranodal septate junction. Cell adhesion, ankyrin-binding protein which may be involved in neurite extension, axonal guidance, synaptogenesis, myelination and neuron-glial cell interactions. The chain is Neurofascin (NFASC) from Homo sapiens (Human).